Here is an 881-residue protein sequence, read N- to C-terminus: MSNTEKNLPTKYDHMSVEEGLYQWWLEGKYFEATGDEKKQPYTIVIPPPNVTGKLHLGHAWDTTLQDILTRTKRMQGYDVLWLPGMDHAGIATQAKVEGKLREEGISRYDLGREKFLEKAWEWKEEYASHIRQQWGKVGLGLDYSRERFTLDKGLSDAVNKVFVQLYEKGLIYRGEYIINWDPATRTALSDIEVIHKEVQGAFYHMNYPLTDGSGHIRLATTRPETMLGDTAVAVHPEDDRYKHLIGKTVTLPIVGREIPIIADEYVEKDFGTGVVKITPAHDPNDFEVGNRHDLPRILVMNEDGSMNEKAGKYNGMDRFECRKALVKDLQEAGVLVEIEPHMHSVGHSERSGAVVEPYLSTQWFVKMAPLAEKAIELQQKEEEKVTFVPDRFENTYLRWMENIHDWCISRQLWWGHRIPAWYHKETGEVYVGTEAPADIENWNQDNDVLDTWFSSALWPFSTLGWPNEDAADFKRYYSTDALVTGYDIIFFWVSRMIFQGLEFTGERPFKDVLIHGLVRDEQGRKMSKSLGNGIDPMDVIEKYGADAMRFFLSTGSAPGQDLRFSMEKVESTWNFINKIWNASRFVLMNMDDMKFEEIDLTGEKSVADKWILTRLNETIESVTRNMDKYEFGEAGRSLYNFIWDDFCDWYIEMAKLPLYGEDEAAKKTTRSILSYVLDQTMRLLHPFMPFVTEKIWQHLPHEGESITVAAWPTVREDLQDTEAAAEMHLLVDIIRSVRNIRAEVNTPMSKKVQMQIKAKDEAVLAQLTKNSSYIERFCNPSELTIQTDLQAPEKAMTAIVTGAELFLPLADLINLDEERARLEKELEKFDKEVERVQKKLSNQGFVAKAPAAVIEGERAKEQDYLEKREAVRQRLADLEK.

The 'HIGH' region motif lies at 49–59 (PNVTGKLHLGH). The short motif at 526-530 (KMSKS) is the 'KMSKS' region element. K529 is a binding site for ATP. A coiled-coil region spans residues 810–881 (LADLINLDEE…VRQRLADLEK (72 aa)).

This sequence belongs to the class-I aminoacyl-tRNA synthetase family. ValS type 1 subfamily. As to quaternary structure, monomer.

It is found in the cytoplasm. The enzyme catalyses tRNA(Val) + L-valine + ATP = L-valyl-tRNA(Val) + AMP + diphosphate. Catalyzes the attachment of valine to tRNA(Val). As ValRS can inadvertently accommodate and process structurally similar amino acids such as threonine, to avoid such errors, it has a 'posttransfer' editing activity that hydrolyzes mischarged Thr-tRNA(Val) in a tRNA-dependent manner. This Bacillus thuringiensis subsp. konkukian (strain 97-27) protein is Valine--tRNA ligase.